A 217-amino-acid polypeptide reads, in one-letter code: Ribosomal RNA small subunit methyltransferase G (217 aa).

Residues Gly-79, Leu-84, 130 to 131 (IE), and Arg-145 each bind S-adenosyl-L-methionine.

This sequence belongs to the methyltransferase superfamily. RNA methyltransferase RsmG family.

Its subcellular location is the cytoplasm. It carries out the reaction guanosine(527) in 16S rRNA + S-adenosyl-L-methionine = N(7)-methylguanosine(527) in 16S rRNA + S-adenosyl-L-homocysteine. In terms of biological role, specifically methylates the N7 position of guanine in position 527 of 16S rRNA. This Hahella chejuensis (strain KCTC 2396) protein is Ribosomal RNA small subunit methyltransferase G.